We begin with the raw amino-acid sequence, 605 residues long: Protein phosphatase 1D (605 aa).

The interaction with CHEK1 stretch occupies residues 1–101 (MAGLYSLGVS…CRRRSSVAFF (101 aa)). The 368-residue stretch at 8–375 (GVSVFSDQGG…DNTSAIVICI (368 aa)) folds into the PPM-type phosphatase domain. A disordered region spans residues 28 to 90 (VVEPEPTAEE…DAGASPAPSR (63 aa)). Phosphoserine occurs at positions 40 and 85. Mn(2+) is bound by residues D105, G106, D314, and D366. The segment at 516–591 (STPGQMKAQE…RRLRGQKKIG (76 aa)) is disordered. Polar residues-rich tracts occupy residues 530 to 544 (PPTN…SNSG) and 555 to 577 (LSRS…NSVK). The segment covering 579–588 (TMRRRLRGQK) has biased composition (basic residues).

It belongs to the PP2C family. Interacts with CHEK1 and CHEK2; dephosphorylates them. Interacts with MAPK14. Requires Mg(2+) as cofactor. Mn(2+) is required as a cofactor. In terms of tissue distribution, expressed in fetal and adult brain. Also detected in fetal liver and skeletal muscle, but not in their adult counterparts.

It is found in the nucleus. Its subcellular location is the cytoplasm. The protein localises to the cytosol. It carries out the reaction O-phospho-L-seryl-[protein] + H2O = L-seryl-[protein] + phosphate. The enzyme catalyses O-phospho-L-threonyl-[protein] + H2O = L-threonyl-[protein] + phosphate. Involved in the negative regulation of p53 expression. Required for the relief of p53-dependent checkpoint mediated cell cycle arrest. Binds to and dephosphorylates 'Ser-15' of TP53 and 'Ser-345' of CHEK1 which contributes to the functional inactivation of these proteins. Mediates MAPK14 dephosphorylation and inactivation. Is also an important regulator of global heterochromatin silencing and critical in maintaining genome integrity. The polypeptide is Protein phosphatase 1D (PPM1D) (Homo sapiens (Human)).